The following is a 399-amino-acid chain: Argininosuccinate synthase (399 aa).

9–17 (AYSGGLDTS) lines the ATP pocket. Tyr-87 serves as a coordination point for L-citrulline. ATP is bound at residue Gly-117. Residues Thr-119, Asn-123, and Asp-124 each contribute to the L-aspartate site. Asn-123 contacts L-citrulline. The L-citrulline site is built by Arg-127, Ser-176, Ser-185, Glu-261, and Tyr-273.

Belongs to the argininosuccinate synthase family. Type 1 subfamily. As to quaternary structure, homotetramer.

It is found in the cytoplasm. It catalyses the reaction L-citrulline + L-aspartate + ATP = 2-(N(omega)-L-arginino)succinate + AMP + diphosphate + H(+). The protein operates within amino-acid biosynthesis; L-arginine biosynthesis; L-arginine from L-ornithine and carbamoyl phosphate: step 2/3. This chain is Argininosuccinate synthase, found in Chlorobium chlorochromatii (strain CaD3).